The following is a 744-amino-acid chain: Tripartite motif-containing protein 3 (744 aa).

Ala2 is subject to N-acetylalanine. Residues 2–290 (AKREDSPGPE…LAAQAFPERP (289 aa)) are interaction with KIF21B. At Ser7 the chain carries Phosphoserine. An RING-type zinc finger spans residues 22-63 (CSICLDRYRCPKVLPCLHTFCERCLQNYIPPQSLTLSCPVCR). A B box-type zinc finger spans residues 110 to 151 (GRPLSCPNHEGKTMEFYCEACETAMCGECRAGEHREHGTVLL). The Zn(2+) site is built by Cys115, His118, Cys138, and His143. Positions 153–224 (DVVEQHKAAL…RKQALVSDLE (72 aa)) form a coiled coil. A Filamin repeat occupies 317–418 (TTSAAAHETV…VRGSPFRVRA (102 aa)). The disordered stretch occupies residues 420–462 (RPGDLPPSPDDVKRRVKSPGGPGSHVRQKAVRRPSSMYSTGGK). At Ser427 the chain carries Phosphoserine. 6 NHL repeats span residues 473–516 (VFRV…FSNE), 520–563 (KFRF…FSPE), 564–605 (GKFK…FQPN), 609–652 (VGRF…YSAD), 656–699 (LFKF…FDSS), and 700–743 (GSFL…YRYL).

It belongs to the TRIM/RBCC family. Forms homooligomers. Interacts with TRIM2; this interaction reduces TRIM2 activity. Associates with myosin-Vb (MYO5B) and alpha-actinin-4 (ACTN4). Component of the CART complex, at least composed of ACTN4, HGS/HRS, MYO5B and TRIM3. Interacts with ZFYVE28/LST2. Interacts with KIF21B. Highly expressed in the brain, moderate levels in the lung, very low levels in the liver, kidney and heart. In the brain, expression was highest in the cerebellum. Expression in the brain is found at low levels at embryonic day 15 and then increases during the first two postnatal weeks before decreasing through adulthood.

The protein localises to the cytoplasm. It localises to the early endosome. It is found in the golgi apparatus. Its subcellular location is the trans-Golgi network. The protein resides in the cell projection. The protein localises to the dendrite. The enzyme catalyses S-ubiquitinyl-[E2 ubiquitin-conjugating enzyme]-L-cysteine + [acceptor protein]-L-lysine = [E2 ubiquitin-conjugating enzyme]-L-cysteine + N(6)-ubiquitinyl-[acceptor protein]-L-lysine.. In terms of biological role, E3 ubiquitin ligase that plays essential roles in neuronal functions such as regulation of neuronal plasticity, learning, and memory. In addition to its neuronal functions, participates in other biological processes such as innate immunity or cell cycle regulation. Component of the cytoskeleton-associated recycling or transport complex in neurons, polyubiquitinates gamma-actin, thus regulating neuronal plasticity, learning, and memory. Ubiquitinates postsynaptic scaffold GKAP, a neuronal substrate involved in synaptic remodeling and thereby modulates dendritic spine morphology. Positively regulates motility of microtubule-dependent motor protein KIF21B. Induces growth arrest via its RING-dependent E3 ligase activity and ubiquinates CDKN1A. Positively regulates TLR3-mediated signaling by mediating 'Lys-63'-linked polyubiquitination of TLR3. In turn, promotes the recognition and sorting of polyubiquitinated TLR3 by the ESCRT complexes. The chain is Tripartite motif-containing protein 3 (Trim3) from Rattus norvegicus (Rat).